The following is a 165-amino-acid chain: Ribosome maturation factor RimM (165 aa).

Positions 90 to 161 (EDEYFIVDLV…LITIRPSGEW (72 aa)) constitute a PRC barrel domain.

Belongs to the RimM family. As to quaternary structure, binds ribosomal protein uS19.

The protein localises to the cytoplasm. In terms of biological role, an accessory protein needed during the final step in the assembly of 30S ribosomal subunit, possibly for assembly of the head region. Essential for efficient processing of 16S rRNA. May be needed both before and after RbfA during the maturation of 16S rRNA. It has affinity for free ribosomal 30S subunits but not for 70S ribosomes. In Clostridium perfringens (strain ATCC 13124 / DSM 756 / JCM 1290 / NCIMB 6125 / NCTC 8237 / Type A), this protein is Ribosome maturation factor RimM.